Here is a 627-residue protein sequence, read N- to C-terminus: Dual specificity testis-specific protein kinase 1 (627 aa).

Residues 1-36 (MAGERPPLRGPGPGEAPGEGPGGAGGGPGRGRPSSY) are disordered. The segment covering 11–30 (PGPGEAPGEGPGGAGGGPGR) has biased composition (gly residues). In terms of domain architecture, Protein kinase spans 52–309 (FDCAEKIGAG…TEITQHLEQI (258 aa)). ATP is bound by residues 58–66 (IGAGFFSEV) and Lys81. The Proton acceptor role is filled by Asp170. The residue at position 215 (Ser215) is a Phosphoserine; by autocatalysis. The segment covering 316–330 (ATPLAKPPLTKAPLT) has biased composition (low complexity). Disordered regions lie at residues 316 to 373 (ATPL…SWGD), 436 to 485 (RCRS…GLAP), 500 to 519 (CSSA…NNNP), and 532 to 565 (REPW…EPEE). At Arg338 the chain carries Omega-N-methylarginine. The span at 348–357 (PDPRLSRSRS) shows a compositional bias: basic and acidic residues. Residues 421-525 (VTTPDILVQP…NNNPPAVVVN (105 aa)) form a required for interaction with YWHAB region. The segment at 528–625 (QGWAREPWNR…PTPSLQLPGA (98 aa)) is required for interaction with PARVA. Positions 528–627 (QGWAREPWNR…PSLQLPGARS (100 aa)) are required for interaction with SPRED1 and SPRY2. Required for TESK1-mediated dephosphorylation of SPRY2 and SPRY2 inhibition of ERK phosphorylation.

The protein belongs to the protein kinase superfamily. TKL Ser/Thr protein kinase family. As to quaternary structure, interacts (via both C- and N-termini) with SPRY4 (via C-terminus); the interaction inhibits TESK1 kinase activity. Interacts with TAOK1; the interaction inhibits TAOK1 kinase activity. Interacts (via C-terminus) with SPRED1 (via C-terminus); the interaction inhibits TESK1 kinase activity. Interacts (via C-terminus) with PARVA/PARVIN (via C-terminus); the interaction inhibits TESK1 kinase activity. Interacts with YWHAB/14-3-3 beta; the interaction is dependent on the phosphorylation of TESK1 Ser-439 and inhibits TESK1 kinase activity. Interacts with SPRY1, SPRY3 and SPRED2. Interacts (via C-terminus) with SPRY2 (via C-terminus); the interaction disrupts SPRY2 interaction with PPP2CA/PP2A-C, possibly by vesicular sequestration of SPRY2. Therefore dephosphorylation of SPRY2 by the serine/threonine-protein phosphatase 2A (PP2A) holoenzyme is lost, inhibiting its interaction with GRB2. Mg(2+) serves as cofactor. It depends on Mn(2+) as a cofactor. Post-translationally, autophosphorylated on serine and tyrosine residues. In terms of tissue distribution, expressed in testes and brain (at protein level).

It is found in the cytoplasm. The protein localises to the perinuclear region. The protein resides in the cytoskeleton. Its subcellular location is the microtubule organizing center. It localises to the centrosome. It is found in the cell projection. The protein localises to the lamellipodium. The catalysed reaction is L-seryl-[protein] + ATP = O-phospho-L-seryl-[protein] + ADP + H(+). The enzyme catalyses L-threonyl-[protein] + ATP = O-phospho-L-threonyl-[protein] + ADP + H(+). It catalyses the reaction L-tyrosyl-[protein] + ATP = O-phospho-L-tyrosyl-[protein] + ADP + H(+). Activated by autophosphorylation on Ser-215. Kinase activity is inhibited by SPRED1. Its function is as follows. Dual specificity protein kinase activity catalyzing autophosphorylation and phosphorylation of exogenous substrates on both serine/threonine and tyrosine residues. Regulates the cellular cytoskeleton by enhancing actin stress fiber formation via phosphorylation of cofilin and by preventing microtubule breakdown via inhibition of TAOK1/MARKK kinase activity. Inhibits podocyte motility via regulation of actin cytoskeletal dynamics and phosphorylation of CFL1. Positively regulates integrin-mediated cell spreading, via phosphorylation of cofilin. Suppresses ciliogenesis via multiple pathways; phosphorylation of CFL1, suppression of ciliary vesicle directional trafficking to the ciliary base, and by facilitating YAP1 nuclear localization where it acts as a transcriptional corepressor of the TEAD4 target genes AURKA and PLK1. Probably plays a central role at and after the meiotic phase of spermatogenesis. The protein is Dual specificity testis-specific protein kinase 1 (Tesk1) of Mus musculus (Mouse).